The primary structure comprises 268 residues: MGFMKHNIVDNVAFSNKLRHVNPKLKVIFALSLLLISVFSTSFIVPLIIFFINSILLLFKAKVPKKIYAVFVGIPLGFGILNLVIFAFLFGTVEWFKINVFGFEIPVYKDGIELGLLLFGRMLGGVSSMLFLAFTTPMVELFYIFRELKMPDVLVDMMMLIYRYIFVLYEEYEKMKFAQESRLGTSNLKSTYKSLGALAAHLFIRAWEKGEKLNITMMSRCYDGKIKLLQTIENPSIKYILFIAIFDIFLIILAYLTKDFTLTSYIKI.

4 helical membrane-spanning segments follow: residues Ser32–Ile52, Val70–Phe90, Gly125–Phe145, and Ile237–Thr257.

Belongs to the CbiQ family.

Its subcellular location is the cell membrane. This is an uncharacterized protein from Methanocaldococcus jannaschii (strain ATCC 43067 / DSM 2661 / JAL-1 / JCM 10045 / NBRC 100440) (Methanococcus jannaschii).